Consider the following 420-residue polypeptide: Glutamyl-tRNA reductase (420 aa).

Substrate is bound by residues 49-52, serine 109, 114-116, and glutamine 120; these read TCNR and EPQ. Cysteine 50 acts as the Nucleophile in catalysis. 189 to 194 is a binding site for NADP(+); it reads GAGETI.

The protein belongs to the glutamyl-tRNA reductase family. In terms of assembly, homodimer.

The enzyme catalyses (S)-4-amino-5-oxopentanoate + tRNA(Glu) + NADP(+) = L-glutamyl-tRNA(Glu) + NADPH + H(+). It participates in porphyrin-containing compound metabolism; protoporphyrin-IX biosynthesis; 5-aminolevulinate from L-glutamyl-tRNA(Glu): step 1/2. Its function is as follows. Catalyzes the NADPH-dependent reduction of glutamyl-tRNA(Glu) to glutamate 1-semialdehyde (GSA). The sequence is that of Glutamyl-tRNA reductase from Yersinia enterocolitica serotype O:8 / biotype 1B (strain NCTC 13174 / 8081).